The chain runs to 126 residues: Histone H2B.5 (126 aa).

Residues 1 to 27 (MAPKAEKKPSEKAPKADKKITKEGGSE) show a composition bias toward basic and acidic residues. Residues 1–34 (MAPKAEKKPSEKAPKADKKITKEGGSERKKKTKK) are disordered. At Ala-2 the chain carries N,N,N-trimethylalanine; alternate. At Ala-2 the chain carries N,N-dimethylalanine; alternate. At Ala-2 the chain carries N-methylalanine; alternate. N6-methyllysine is present on Lys-4. N6-acetyllysine occurs at positions 7, 12, 18, and 19. Lys-122 participates in a covalent cross-link: Glycyl lysine isopeptide (Lys-Gly) (interchain with G-Cter in ubiquitin).

It belongs to the histone H2B family. As to quaternary structure, the nucleosome is a histone octamer containing two molecules each of H2A, H2B, H3 and H4 assembled in one H3-H4 heterotetramer and two H2A-H2B heterodimers. The octamer wraps approximately 147 bp of DNA. Post-translationally, can be acetylated to form H2BK6ac, H2BK33ac and H2BK34ac. Monoubiquitinated by BRE1 to form H2BK143ub1 and deubiquitinated by UBP26. Required for heterochromatic histone H3 di- and trimethylation at H3K4me. May give a specific tag for epigenetic transcriptional activation.

The protein resides in the nucleus. The protein localises to the chromosome. Core component of nucleosome. Nucleosomes wrap and compact DNA into chromatin, limiting DNA accessibility to the cellular machineries which require DNA as a template. Histones thereby play a central role in transcription regulation, DNA repair, DNA replication and chromosomal stability. DNA accessibility is regulated via a complex set of post-translational modifications of histones, also called histone code, and nucleosome remodeling. The sequence is that of Histone H2B.5 from Arabidopsis thaliana (Mouse-ear cress).